We begin with the raw amino-acid sequence, 919 residues long: Eukaryotic translation initiation factor 3 subunit C (919 aa).

Residues M1 to A28 form a disordered region. Acidic residues predominate over residues S11 to V20. Phosphoserine occurs at positions 34, 165, and 177. The tract at residues L154–A275 is disordered. Residues Q162–E171 are compositionally biased toward acidic residues. Acidic residues predominate over residues A210–N236. Over residues M241 to I269 the composition is skewed to basic and acidic residues. Positions F640–P816 constitute a PCI domain. The interval F848–E919 is disordered. The segment covering Q883–N894 has biased composition (basic residues). Over residues Q895 to E919 the composition is skewed to low complexity.

It belongs to the eIF-3 subunit C family. Component of the eukaryotic translation initiation factor 3 (eIF-3) complex. The eIF-3 complex interacts with pix.

It localises to the cytoplasm. Its function is as follows. Component of the eukaryotic translation initiation factor 3 (eIF-3) complex, which is involved in protein synthesis of a specialized repertoire of mRNAs and, together with other initiation factors, stimulates binding of mRNA and methionyl-tRNAi to the 40S ribosome. The eIF-3 complex specifically targets and initiates translation of a subset of mRNAs involved in cell proliferation. In Drosophila willistoni (Fruit fly), this protein is Eukaryotic translation initiation factor 3 subunit C.